A 91-amino-acid polypeptide reads, in one-letter code: Small ribosomal subunit protein uS15 (91 aa).

It belongs to the universal ribosomal protein uS15 family. As to quaternary structure, part of the 30S ribosomal subunit. Forms a bridge to the 50S subunit in the 70S ribosome, contacting the 23S rRNA.

One of the primary rRNA binding proteins, it binds directly to 16S rRNA where it helps nucleate assembly of the platform of the 30S subunit by binding and bridging several RNA helices of the 16S rRNA. Functionally, forms an intersubunit bridge (bridge B4) with the 23S rRNA of the 50S subunit in the ribosome. The sequence is that of Small ribosomal subunit protein uS15 from Rickettsia akari (strain Hartford).